Here is a 264-residue protein sequence, read N- to C-terminus: MNVSVNIKNVTKEYRIYRTNKERMKDALIPKHKNKTFFALDDISLKAYEGDVIGLVGINGSGKSTLSNIIGGSLSPTVGKVDRNGEVSVIAISAGLSGQLTGIENIEFKMLCMGFKRKEIKAMTPKIIEFSELGEFIYQPVKKYSSGMRAKLGFSINITVNPDILVIDEALSVGDQTFAQKCLDKIYEFKEQNKTIFFVSHNLGQVRQFCTKIAWIEGGKLKDYGELDDVLPKYEAFLNDFKKKSKAEQKEFRNKLDEARFVIK.

Residues 5-243 (VNIKNVTKEY…YEAFLNDFKK (239 aa)) form the ABC transporter domain. 57–64 (GINGSGKS) lines the ATP pocket.

This sequence belongs to the ABC transporter superfamily. Teichoic acids exporter (TC 3.A.1.104.1) family. In terms of assembly, the complex is composed of two ATP-binding proteins (TagH) and two transmembrane proteins (TagG).

Its subcellular location is the cell membrane. The enzyme catalyses ATP + H2O + teichoic acidSide 1 = ADP + phosphate + teichoic acidSide 2.. Functionally, part of the ABC transporter complex TagGH involved in teichoic acids export. Responsible for energy coupling to the transport system. In Staphylococcus aureus (strain Mu50 / ATCC 700699), this protein is Teichoic acids export ATP-binding protein TagH.